Here is a 463-residue protein sequence, read N- to C-terminus: Polyadenylate-binding protein-interacting protein 1 (463 aa).

The segment at 1-86 is disordered; the sequence is MSDGFERAPG…HKRTSPAAQL (86 aa). Residues 145-362 form the MIF4G domain; it reads TEYVQDFLNH…LKLVELRSSN (218 aa). Residues 420–442 are disordered; it reads RDYDENGTDGGDSYFEDDDDNEM. A compositionally biased stretch (acidic residues) spans 433–442; the sequence is YFEDDDDNEM.

As to quaternary structure, interacts with the RRM1-RRM2 and C-terminal regions of epabp.

The protein localises to the cytoplasm. Its function is as follows. Acts as a coactivator in the regulation of translation initiation of poly(A)-containing mRNAs. In Xenopus laevis (African clawed frog), this protein is Polyadenylate-binding protein-interacting protein 1.